The primary structure comprises 132 residues: Small ribosomal subunit protein uS8 (132 aa).

Belongs to the universal ribosomal protein uS8 family. As to quaternary structure, part of the 30S ribosomal subunit. Contacts proteins S5 and S12.

Functionally, one of the primary rRNA binding proteins, it binds directly to 16S rRNA central domain where it helps coordinate assembly of the platform of the 30S subunit. The sequence is that of Small ribosomal subunit protein uS8 from Streptococcus sanguinis (strain SK36).